The primary structure comprises 279 residues: Histone chaperone ASF1 (279 aa).

Residues 1 to 143 (MSIVSLLGIK…HIVRNILAEK (143 aa)) are interaction with HIR1. An interaction with histone H3, histone H4, RAD53 and the RF-C complex region spans residues 1 to 155 (MSIVSLLGIK…VTRFNIVWDN (155 aa)). A disordered region spans residues 156–279 (ENEGDLYPPE…TPKDAARSTN (124 aa)). Positions 168 to 244 (GVDDEEEEDD…DEEEGEEEVG (77 aa)) are enriched in acidic residues. The stretch at 192-243 (DDQEDGEGEAEEAAEEEEEEEEKTEDNETNLEEEEEDIENSDGDEEEGEEEV) forms a coiled coil. 2 stretches are compositionally biased toward basic and acidic residues: residues 245–254 (SVDKNEDGND) and 269–279 (STPKDAARSTN).

This sequence belongs to the ASF1 family. In terms of assembly, interacts with histone H3/H4 heterodimers via both histone H3 and histone H4. Binds with higher affinity to H3/H4 heterodimers where histone H3 has been pre-acetylated on 'Lys-14'. Interacts with RAD53 and this may impair interaction with histones and chromatin assembly; the interaction is reduced upon activation of DNA damage or replication checkpoints which in turn promotes histone binding and chromatin assembly. Interacts with the CAC2 subunit of chromatin assembly factor 1 (CAF-1). Interacts with the HIR1, HIR2, HIR3 and HPC2 subunits of the HIR complex. Interacts with the RFC1, RFC2, RFC3, RFC4 and RFC5 subunits of the replication factor C (RF-C/RFC) complex; which may recruit this protein to DNA. Interacts with the SAS2, SAS4 and SAS5 subunits of the SAS/SAS-I complex. Interacts with the BDF1, BDF2, SPT15, TAF1 and TAF7 subunits of the TFIID complex. Interacts with RTT109 and VPS75; the interaction with RTT109 is direct.

Its subcellular location is the nucleus. Histone chaperone that facilitates histone deposition and histone exchange and removal during nucleosome assembly and disassembly. Facilitates histone deposition through both replication-dependent and replication-independent chromatin assembly pathways. Cooperates with chromatin assembly factor 1 (CAF-1) to promote replication-dependent chromatin assembly and with the HIR complex to promote replication-independent chromatin assembly, which may occur during transcription and DNA repair. May be required for the maintenance of a subset of replication elongation factors, including DNA polymerase epsilon, the RFC complex and PCNA, at stalled replication forks. Also required for RTT109-dependent acetylation of histone H3 on 'Lys-9' and 'Lys-56'. Promotion of RTT109-mediated histone H3 'Lys-56' acetylation is dependent on interactions with histone H3 pre-acetylated on 'Lys-14'. The protein is Histone chaperone ASF1 of Saccharomyces cerevisiae (strain ATCC 204508 / S288c) (Baker's yeast).